We begin with the raw amino-acid sequence, 501 residues long: 2-isopropylmalate synthase (501 aa).

In terms of domain architecture, Pyruvate carboxyltransferase spans 7-269; it reads VRIFDTTLRD…QTQIKTEEIA (263 aa). Mn(2+) contacts are provided by Asp16, His204, His206, and Asn240. A regulatory domain region spans residues 394–501; it reads QLEGFTVSTG…RAYISALNRL (108 aa).

This sequence belongs to the alpha-IPM synthase/homocitrate synthase family. LeuA type 1 subfamily. In terms of assembly, homodimer. Mn(2+) is required as a cofactor.

The protein resides in the cytoplasm. The catalysed reaction is 3-methyl-2-oxobutanoate + acetyl-CoA + H2O = (2S)-2-isopropylmalate + CoA + H(+). Its pathway is amino-acid biosynthesis; L-leucine biosynthesis; L-leucine from 3-methyl-2-oxobutanoate: step 1/4. Functionally, catalyzes the condensation of the acetyl group of acetyl-CoA with 3-methyl-2-oxobutanoate (2-ketoisovalerate) to form 3-carboxy-3-hydroxy-4-methylpentanoate (2-isopropylmalate). The protein is 2-isopropylmalate synthase of Leptospira interrogans serogroup Icterohaemorrhagiae serovar copenhageni (strain Fiocruz L1-130).